The following is a 415-amino-acid chain: Thyroxine-binding globulin (415 aa).

Residues 1-20 (MSPFLYLVLLVLGLHATIHC) form the signal peptide. Asn-36, Asn-99, Asn-165, and Asn-253 each carry an N-linked (GlcNAc...) asparagine glycan. Thyroxine-binding residues include Asn-293 and Arg-398.

Belongs to the serpin family.

Its subcellular location is the secreted. Functionally, major thyroid hormone transport protein in serum. This is Thyroxine-binding globulin (SERPINA7) from Pan troglodytes (Chimpanzee).